Consider the following 157-residue polypeptide: Small ribosomal subunit protein uS7 (157 aa).

This sequence belongs to the universal ribosomal protein uS7 family. In terms of assembly, part of the 30S ribosomal subunit. Contacts proteins S9 and S11.

Its function is as follows. One of the primary rRNA binding proteins, it binds directly to 16S rRNA where it nucleates assembly of the head domain of the 30S subunit. Is located at the subunit interface close to the decoding center, probably blocks exit of the E-site tRNA. This is Small ribosomal subunit protein uS7 from Francisella tularensis subsp. holarctica (strain OSU18).